The following is a 93-amino-acid chain: Em protein H5 (93 aa).

The segment at 1 to 93 (MASGQQERSE…IDESKFKTKS (93 aa)) is disordered. Basic and acidic residues-rich tracts occupy residues 7 to 19 (ERSELDRMAREGE), 32 to 62 (EAQEHLADGRSRGGETRKEQLGEEGYREMGR), and 73 to 93 (GGERAAREGIEIDESKFKTKS).

It belongs to the small hydrophilic plant seed protein family.

In terms of biological role, it is thought to provide protection for the cytoplasm during the desiccation stage of embryo development. This chain is Em protein H5 (EMH5), found in Triticum aestivum (Wheat).